The chain runs to 1050 residues: MDS1 and EVI1 complex locus protein EVI1-B (1050 aa).

C2H2-type zinc fingers lie at residues 21 to 48 (YHCE…GTPH), 75 to 97 (HECK…LLSH), and 103 to 125 (YKCD…QMSH). A C2H2-type 4; degenerate zinc finger spans residues 131–155 (YECENCSKQVFTDPSNLQRHIRSQH). 2 consecutive C2H2-type zinc fingers follow at residues 161–183 (HACS…KHIH) and 189–211 (FVCE…KRMH). Residues 218–240 (IKCKDCGQMFSTTSSLNKHRRFC) form a C2H2-type 7; atypical zinc finger. Disordered stretches follow at residues 371–421 (ITEN…SDKD) and 529–612 (PLKV…EKKD). Positions 379-390 (RPHEKVSDHSES) are enriched in basic and acidic residues. Residues 397-411 (STPSGSDLETTSGSD) are compositionally biased toward polar residues. The Nuclear localization signal signature appears at 420–433 (KDKLKENGKLYKDK). Residues 529 to 542 (PLKVEPESPKESKK) are compositionally biased toward basic and acidic residues. The CTBP-binding motif 1 signature appears at 551–555 (AFDLT). Residues 564–576 (SPNAPSKSSAPTS) are compositionally biased toward low complexity. A CTBP-binding motif 2 motif is present at residues 582–586 (PLDLS). A compositionally biased stretch (polar residues) spans 588–598 (GSRSRATTTKQ). The segment covering 599 to 612 (TESRKNHIFGEKKD) has biased composition (basic and acidic residues). C2H2-type zinc fingers lie at residues 731–753 (YTCR…LRTH), 759–782 (YRCK…RNIH), and 788–810 (FKCH…LKKH). The segment at 928 to 951 (KSEVNCKVSPSRHDDDDDDEEEDF) is disordered.

In terms of assembly, homooligomer. Interacts with ctbp.

It localises to the nucleus. It is found in the nucleus speckle. Its function is as follows. Transcriptional repressor during pronephros development. Plays a role in regionalization of the pronephros; may promote formation of the distal tubule and duct over formation of the glomus and proximal tubule. The chain is MDS1 and EVI1 complex locus protein EVI1-B (mecom-b) from Xenopus laevis (African clawed frog).